Reading from the N-terminus, the 280-residue chain is MKKLYGVIGNPIGHSMSPDIHNASLKDLGLDGHYHAFKVEENDLEDAVKGIRALGVQGINVTVPHKVSIMDYLDHIDESAKVLGAVNTVRREGDKLVGYNTDGEGFVKSLMKVLDKPISELSFLMIGAGGAARAIFTTIVRNTPKKFDICNRTLEKAKRLTEATPSFHNKEVLSIKEAEERLEQYDVIIHTTSVGMYPNVDDVPLSLQRAASSAVVCDIVYNPIQTALLKEASQKGLKTLDGVGMFVEQAALSFQLWTGQEPNIEKMRSIVIGKLGGTEC.

Residues 15–17 and T62 each bind shikimate; that span reads SMS. Residue K66 is the Proton acceptor of the active site. Residue E78 participates in NADP(+) binding. The shikimate site is built by N87 and D102. Residues 127–131, 151–156, and I219 each bind NADP(+); these read GAGGA and NRTLEK. Y221 contributes to the shikimate binding site. G242 lines the NADP(+) pocket.

The protein belongs to the shikimate dehydrogenase family. Homodimer.

It catalyses the reaction shikimate + NADP(+) = 3-dehydroshikimate + NADPH + H(+). The protein operates within metabolic intermediate biosynthesis; chorismate biosynthesis; chorismate from D-erythrose 4-phosphate and phosphoenolpyruvate: step 4/7. In terms of biological role, involved in the biosynthesis of the chorismate, which leads to the biosynthesis of aromatic amino acids. Catalyzes the reversible NADPH linked reduction of 3-dehydroshikimate (DHSA) to yield shikimate (SA). This is Shikimate dehydrogenase (NADP(+)) from Bacillus subtilis (strain 168).